The chain runs to 281 residues: NADPH-dependent 7-cyano-7-deazaguanine reductase (281 aa).

89 to 91 (VES) is a binding site for substrate. 91-92 (SK) is an NADPH binding site. Cysteine 188 functions as the Thioimide intermediate in the catalytic mechanism. Aspartate 195 acts as the Proton donor in catalysis. A substrate-binding site is contributed by 227-228 (HE). 256-257 (RG) contacts NADPH.

It belongs to the GTP cyclohydrolase I family. QueF type 2 subfamily. In terms of assembly, homodimer.

The protein localises to the cytoplasm. It catalyses the reaction 7-aminomethyl-7-carbaguanine + 2 NADP(+) = 7-cyano-7-deazaguanine + 2 NADPH + 3 H(+). Its pathway is tRNA modification; tRNA-queuosine biosynthesis. Functionally, catalyzes the NADPH-dependent reduction of 7-cyano-7-deazaguanine (preQ0) to 7-aminomethyl-7-deazaguanine (preQ1). The protein is NADPH-dependent 7-cyano-7-deazaguanine reductase of Azoarcus sp. (strain BH72).